The sequence spans 216 residues: Peroxiredoxin (216 aa).

Residues 2–158 (VVIGEKFPEV…ILRLVKALKI (157 aa)) form the Thioredoxin domain. The Cysteine sulfenic acid (-SOH) intermediate role is filled by C46. Position 121 (R121) interacts with substrate. Residues C205 and C211 are joined by a disulfide bond.

This sequence belongs to the peroxiredoxin family. Prx6 subfamily. Homodecamer. Pentamer of dimers that assemble into a ring structure.

It is found in the cytoplasm. It catalyses the reaction a hydroperoxide + [thioredoxin]-dithiol = an alcohol + [thioredoxin]-disulfide + H2O. Functionally, thiol-specific peroxidase that catalyzes the reduction of hydrogen peroxide and organic hydroperoxides to water and alcohols, respectively. Plays a role in cell protection against oxidative stress by detoxifying peroxides. The protein is Peroxiredoxin of Pyrococcus abyssi (strain GE5 / Orsay).